A 434-amino-acid polypeptide reads, in one-letter code: D-amino acid dehydrogenase (434 aa).

3-17 (VVILGSGVVGVTSAW) provides a ligand contact to FAD.

This sequence belongs to the DadA oxidoreductase family. The cofactor is FAD.

The enzyme catalyses a D-alpha-amino acid + A + H2O = a 2-oxocarboxylate + AH2 + NH4(+). It functions in the pathway amino-acid degradation; D-alanine degradation; NH(3) and pyruvate from D-alanine: step 1/1. In terms of biological role, oxidative deamination of D-amino acids. The polypeptide is D-amino acid dehydrogenase (Yersinia pseudotuberculosis serotype O:1b (strain IP 31758)).